The primary structure comprises 339 residues: Undecaprenyl-phosphate 4-deoxy-4-formamido-L-arabinose transferase (339 aa).

2 helical membrane-spanning segments follow: residues 235–255 (LSII…MLIV) and 270–290 (FVLF…MGLL).

This sequence belongs to the glycosyltransferase 2 family.

Its subcellular location is the cell inner membrane. It catalyses the reaction UDP-4-deoxy-4-formamido-beta-L-arabinose + di-trans,octa-cis-undecaprenyl phosphate = 4-deoxy-4-formamido-alpha-L-arabinopyranosyl di-trans,octa-cis-undecaprenyl phosphate + UDP. It participates in glycolipid biosynthesis; 4-amino-4-deoxy-alpha-L-arabinose undecaprenyl phosphate biosynthesis; 4-amino-4-deoxy-alpha-L-arabinose undecaprenyl phosphate from UDP-4-deoxy-4-formamido-beta-L-arabinose and undecaprenyl phosphate: step 1/2. Its pathway is bacterial outer membrane biogenesis; lipopolysaccharide biosynthesis. In terms of biological role, catalyzes the transfer of 4-deoxy-4-formamido-L-arabinose from UDP to undecaprenyl phosphate. The modified arabinose is attached to lipid A and is required for resistance to polymyxin and cationic antimicrobial peptides. The sequence is that of Undecaprenyl-phosphate 4-deoxy-4-formamido-L-arabinose transferase from Pseudomonas fluorescens (strain ATCC BAA-477 / NRRL B-23932 / Pf-5).